The following is a 510-amino-acid chain: Glucose-6-phosphate 1-dehydrogenase (510 aa).

Residues 29–36, Arg-63, and Lys-164 contribute to the NADP(+) site; that span reads GASGDLAK. Residues Lys-164, 194–198, Glu-232, and Asp-251 each bind D-glucose 6-phosphate; that span reads HYLGK. The active-site Proton acceptor is His-256. An NADP(+)-binding site is contributed by Lys-347. Lys-350 contacts D-glucose 6-phosphate. NADP(+) is bound by residues Lys-356, Arg-360, and Arg-382. Residue Gln-384 coordinates D-glucose 6-phosphate. NADP(+) contacts are provided by residues 390–392, 410–412, and Arg-477; these read YIK and DLT.

It belongs to the glucose-6-phosphate dehydrogenase family.

It catalyses the reaction D-glucose 6-phosphate + NADP(+) = 6-phospho-D-glucono-1,5-lactone + NADPH + H(+). It functions in the pathway carbohydrate degradation; pentose phosphate pathway; D-ribulose 5-phosphate from D-glucose 6-phosphate (oxidative stage): step 1/3. Its function is as follows. Catalyzes the rate-limiting step of the oxidative pentose-phosphate pathway, which represents a route for the dissimilation of carbohydrates besides glycolysis. The main function of this enzyme is to provide reducing power (NADPH) and pentose phosphates for fatty acid and nucleic acid synthesis. The sequence is that of Glucose-6-phosphate 1-dehydrogenase (gsdA) from Aspergillus niger.